We begin with the raw amino-acid sequence, 118 residues long: Small ribosomal subunit protein uS13 (118 aa).

The interval 91 to 118 is disordered; the sequence is HRRGLPVRGQRTKTNARTRKGPRKPIKK.

The protein belongs to the universal ribosomal protein uS13 family. As to quaternary structure, part of the 30S ribosomal subunit. Forms a loose heterodimer with protein S19. Forms two bridges to the 50S subunit in the 70S ribosome.

Its function is as follows. Located at the top of the head of the 30S subunit, it contacts several helices of the 16S rRNA. In the 70S ribosome it contacts the 23S rRNA (bridge B1a) and protein L5 of the 50S subunit (bridge B1b), connecting the 2 subunits; these bridges are implicated in subunit movement. Contacts the tRNAs in the A and P-sites. The sequence is that of Small ribosomal subunit protein uS13 from Hamiltonella defensa subsp. Acyrthosiphon pisum (strain 5AT).